A 74-amino-acid polypeptide reads, in one-letter code: Translation initiation factor IF-1 (74 aa).

The 72-residue stretch at 1-72 (MSKQDLIEME…TKGRITYRLR (72 aa)) folds into the S1-like domain.

It belongs to the IF-1 family. As to quaternary structure, component of the 30S ribosomal translation pre-initiation complex which assembles on the 30S ribosome in the order IF-2 and IF-3, IF-1 and N-formylmethionyl-tRNA(fMet); mRNA recruitment can occur at any time during PIC assembly.

It is found in the cytoplasm. One of the essential components for the initiation of protein synthesis. Stabilizes the binding of IF-2 and IF-3 on the 30S subunit to which N-formylmethionyl-tRNA(fMet) subsequently binds. Helps modulate mRNA selection, yielding the 30S pre-initiation complex (PIC). Upon addition of the 50S ribosomal subunit IF-1, IF-2 and IF-3 are released leaving the mature 70S translation initiation complex. This Trichodesmium erythraeum (strain IMS101) protein is Translation initiation factor IF-1.